The primary structure comprises 204 residues: Imidazoleglycerol-phosphate dehydratase (204 aa).

Belongs to the imidazoleglycerol-phosphate dehydratase family.

The protein localises to the cytoplasm. The catalysed reaction is D-erythro-1-(imidazol-4-yl)glycerol 3-phosphate = 3-(imidazol-4-yl)-2-oxopropyl phosphate + H2O. Its pathway is amino-acid biosynthesis; L-histidine biosynthesis; L-histidine from 5-phospho-alpha-D-ribose 1-diphosphate: step 6/9. In Rhodococcus erythropolis (strain PR4 / NBRC 100887), this protein is Imidazoleglycerol-phosphate dehydratase.